The sequence spans 195 residues: Probable nicotinate-nucleotide adenylyltransferase (195 aa).

The protein belongs to the NadD family.

It carries out the reaction nicotinate beta-D-ribonucleotide + ATP + H(+) = deamido-NAD(+) + diphosphate. It functions in the pathway cofactor biosynthesis; NAD(+) biosynthesis; deamido-NAD(+) from nicotinate D-ribonucleotide: step 1/1. Catalyzes the reversible adenylation of nicotinate mononucleotide (NaMN) to nicotinic acid adenine dinucleotide (NaAD). In Chlorobaculum parvum (strain DSM 263 / NCIMB 8327) (Chlorobium vibrioforme subsp. thiosulfatophilum), this protein is Probable nicotinate-nucleotide adenylyltransferase.